Consider the following 88-residue polypeptide: MAHKKAGGSSRNGRDSPGQRRGIKRFGGQKVLAGNILVRQLGTKIHPGENVGMGRDYTLFAKVNGIVTYETYFRKCKRYSRVHIQPTV.

A disordered region spans residues Met1–Arg25.

It belongs to the bacterial ribosomal protein bL27 family.

This Lawsonia intracellularis protein is Large ribosomal subunit protein bL27 (rpmA).